The following is a 456-amino-acid chain: Multidrug resistance protein NorM (456 aa).

12 consecutive transmembrane segments (helical) span residues Leu-11–Val-31, Ile-53–Ala-73, Leu-93–Ile-113, Thr-126–Leu-146, Gly-159–Tyr-179, Gly-193–Val-213, Phe-242–Ile-262, Ala-276–Ile-296, His-315–Tyr-335, Val-349–Ile-369, Phe-391–Ile-411, and Pro-417–Met-437.

Belongs to the multi antimicrobial extrusion (MATE) (TC 2.A.66.1) family.

Its subcellular location is the cell inner membrane. Functionally, multidrug efflux pump that functions as a Na(+)/drug antiporter. The sequence is that of Multidrug resistance protein NorM (norM) from Photobacterium profundum (strain SS9).